A 458-amino-acid chain; its full sequence is Protein amnionless (458 aa).

An N-terminal signal peptide occupies residues 1–19; that stretch reads MGALGRALLWLQLCALARA. Topologically, residues 20–366 are extracellular; that stretch reads AYKLWVPTTD…LGSGSRAGLA (347 aa). N-linked (GlcNAc...) asparagine glycosylation is present at N35. Disulfide bonds link C43–C96, C137–C213, C205–C211, C223–C249, C234–C250, and C239–C253. The interaction with CUBN stretch occupies residues 67-87; sequence SDMLLPRDGEFVLASGAGFGA. The VWFC domain occupies 203–254; the sequence is GACADPSGCVCGDAEVQPWICAALLQPLGGRCPPAACPDALRPEGQCCDLCG. A helical membrane pass occupies residues 367–387; it reads GGVAAGLLLLLLALAAGLLLL. Topologically, residues 388 to 458 are cytoplasmic; that stretch reads RRAPRLRWTK…VNPLFAEAEA (71 aa). The tract at residues 422 to 446 is disordered; that stretch reads SVGPVPRTPQPPPAQQAGSSSTSRS.

Interacts (via extracellular region) with CUBN/cubilin. This gives rise to a huge complex containing one AMN chain and three CUBN chains. In terms of processing, N-glycosylated. A soluble form arises by proteolytic removal of the membrane anchor. As to expression, detected in kidney (at protein level). Detected in kidney and ileum.

The protein localises to the apical cell membrane. Its subcellular location is the cell membrane. It is found in the endosome membrane. The protein resides in the membrane. It localises to the coated pit. The protein localises to the secreted. In terms of biological role, membrane-bound component of the endocytic receptor formed by AMN and CUBN. Required for normal CUBN glycosylation and trafficking to the cell surface. The complex formed by AMN and CUBN is required for efficient absorption of vitamin B12. Required for normal CUBN-mediated protein transport in the kidney. This is Protein amnionless (AMN) from Canis lupus familiaris (Dog).